The sequence spans 314 residues: DDRGK domain-containing protein 1 (314 aa).

Residues 1 to 28 form a helical membrane-spanning segment; that stretch reads MVAPVWYLVAAALLVGFILFLTRSRGRA. The tract at residues 1–114 is mediates interaction with CDK5RAP3; that stretch reads MVAPVWYLVA…VEKPAETHLS (114 aa). Over 29-314 the chain is Cytoplasmic; that stretch reads ASAGQEPLHN…GRESPAQAPA (286 aa). Disordered stretches follow at residues 31–75 and 100–186; these read AGQE…SRLQ and QEEE…QREH. Residues serine 72 and serine 114 each carry the phosphoserine modification. Positions 118–216 are mediates interaction with TRIP4; it reads GAKKLRKLEE…MTEEQSQSFL (99 aa). Over residues 124–186 the composition is skewed to basic and acidic residues; sequence KLEEKQARKA…AREEQAQREH (63 aa). Positions 195-209 match the UFM1-interacting motif (UFIM) motif; the sequence is AFVVEEEGVGETMTE. Residues 216-314 are mediates interaction with UFL1; the sequence is LTEFINYIKQ…GRESPAQAPA (99 aa). Positions 229 to 273 constitute a PCI domain; it reads VLLEDLASQVGLRTQDTINRIQDLLAEGTITGVIDDRGKFIYITP. Lysine 267 is covalently cross-linked (Glycyl lysine isopeptide (Lys-Gly) (interchain with G-Cter in UFM1)).

The protein belongs to the DDRGK1 family. As to quaternary structure, component of the UFM1 ribosome E3 ligase (UREL) complex, composed of UFL1, DDRGK1 and CDK5RAP3. Interacts with (unphosphorylated) ERN1/IRE1-alpha; interaction is dependent on UFM1 and takes place in response to endoplasmic reticulum stress, regulating ERN1/IRE1-alpha stability. Interacts with NFKBIA. Interacts with SOX9. Post-translationally, ubiquitinated. Ubiquitination probably triggers proteasomal degradation and is negatively regulated by UFL1, the enzyme involved in the ufmylation of DDRGK1. Ufmylated; conjugated to ubiquitin-like protein UFM1, probably at Lys-267 by UFL1. The relevance of ufmylation is however unclear: as DDRGK1 acts as a substrate adapters for ufmylation, it is uncertain whether ufmylation is a collateral effect of ufmylation process or is required to regulate its activity. As to expression, widely expressed (at protein level). In the brain, highest levels in medulla oblongata, followed by cerebral cortex, cerebellum and frontal lobe.

The protein resides in the endoplasmic reticulum membrane. Its function is as follows. Component of the UFM1 ribosome E3 ligase (UREL) complex, a multiprotein complex that catalyzes ufmylation of endoplasmic reticulum-docked proteins. The UREL complex plays a key role in ribosome recycling by mediating mono-ufmylation of the RPL26/uL24 subunit of the 60S ribosome following ribosome dissociation: ufmylation weakens the junction between post-termination 60S subunits and SEC61 translocons, promoting release and recycling of the large ribosomal subunit from the endoplasmic reticulum membrane. Ufmylation of RPL26/uL24 and subsequent 60S ribosome recycling either take place after normal termination of translation or after ribosome stalling during cotranslational translocation at the endoplasmic reticulum. Within the UREL complex, DDRGK1 tethers the complex to the endoplasmic reticulum membrane to restrict its activity to endoplasmic reticulum-docked ribosomes and acts as an ufmylation 'reader': following RPL26/uL24 ufmylation, DDRGK1 specifically binds to ufmylated RPL26/uL24 via its UFIM motif, resulting in stable association between the 60S ribosome and the UREL complex, followed by dissociation of the 60S ribosome subunit from the endoplasmic reticulum membrane. The UREL complex is also involved in reticulophagy in response to endoplasmic reticulum stress by promoting ufmylation of proteins such as CYB5R3 and RPN1, thereby promoting lysosomal degradation of ufmylated proteins. Ufmylation-dependent reticulophagy inhibits the unfolded protein response (UPR) by regulating ERN1/IRE1-alpha stability. Acts as a regulator of immunity by promoting differentiation of B-cells into plasma cells: acts by promoting expansion of the endoplasmic reticulum and regulating the unfolded protein response (UPR). May also be required for TRIP4 ufmylation. May play a role in NF-kappa-B-mediated transcription through regulation of the phosphorylation and the degradation of NFKBIA, the inhibitor of NF-kappa-B. Plays a role in cartilage development through SOX9, inhibiting the ubiquitin-mediated proteasomal degradation of this transcriptional regulator. Required for stabilization and ufmylation of ATG9A. The protein is DDRGK domain-containing protein 1 of Homo sapiens (Human).